The sequence spans 199 residues: MSASVKCGACAKTAYPLESVVANNNSYHKGCFKCSTCNSTLNVKTFKSFEGKLYCPVHTPKVSATAVTDSVALKNALNAPKKVAEGLGNAHRGLDEKPNIGLDSMATANALNAPKKVVEGLGNVQKGIGGKPTYAVFGADGQPTGEQQEQQQYTEEQYEQPQEEQQYQEEQQQYQEEEQQYQEEEQQYQEEEQQYEEEQ.

Positions 5-65 (VKCGACAKTA…PVHTPKVSAT (61 aa)) constitute an LIM zinc-binding domain. The segment at 134 to 199 (YAVFGADGQP…EEEQQYEEEQ (66 aa)) is disordered. Composition is skewed to low complexity over residues 146 to 155 (EQQEQQQYTE) and 163 to 174 (EEQQYQEEQQQY). Residues 175-199 (QEEEQQYQEEEQQYQEEEQQYEEEQ) are compositionally biased toward acidic residues.

As to quaternary structure, may interact with rac1A.

Its subcellular location is the cytoplasm. The protein localises to the cell cortex. It localises to the nucleus. It is found in the cell projection. The protein resides in the lamellipodium. Its subcellular location is the filopodium. The protein localises to the cytoskeleton. In terms of biological role, associates with the actin cytoskeleton and may regulate actin polymerization in lamellipodia, through a rac1-dependent signaling pathway. May play a role in cell motility. Involved in cytokinesis by regulating the microtubule system and linking it to the cortical actin network. This Dictyostelium discoideum (Social amoeba) protein is LIM domain-containing protein E (limE).